A 328-amino-acid chain; its full sequence is Arabinose 5-phosphate isomerase KdsD (328 aa).

The SIS domain maps to 42-184 (CEKMFWCKGK…AVALLKARGF (143 aa)). Substrate is bound by residues 75–76 (GT), histidine 82, histidine 88, 114–123 (ALIPVLKRLH), 148–150 (KVA), threonine 222, and aspartate 275. Histidine 82 contacts Zn(2+). The 59-residue stretch at 210 to 268 (MHTGDEIPHVKKTASLRDALLEVTRKNLGMTVICDDNMMIEGIFTDGDLRRVFDMGVDV) folds into the CBS 1 domain. The CBS 2 domain occupies 277–328 (MTPGGIRVRPGILAVEALNLMQSRHITSVMVADGDHLLGVLHMHDLLRAGVV).

Belongs to the SIS family. GutQ/KpsF subfamily. As to quaternary structure, homotetramer.

The enzyme catalyses D-arabinose 5-phosphate = D-ribulose 5-phosphate. Its pathway is carbohydrate biosynthesis; 3-deoxy-D-manno-octulosonate biosynthesis; 3-deoxy-D-manno-octulosonate from D-ribulose 5-phosphate: step 1/3. The protein operates within bacterial outer membrane biogenesis; lipopolysaccharide biosynthesis. Its function is as follows. Involved in the biosynthesis of 3-deoxy-D-manno-octulosonate (KDO), a unique 8-carbon sugar component of lipopolysaccharides (LPSs). Catalyzes the reversible aldol-ketol isomerization between D-ribulose 5-phosphate (Ru5P) and D-arabinose 5-phosphate (A5P). The chain is Arabinose 5-phosphate isomerase KdsD (kdsD) from Escherichia coli O6:H1 (strain CFT073 / ATCC 700928 / UPEC).